The sequence spans 303 residues: Elongation factor Ts (303 aa).

Residues 80-83 (TDFV) are involved in Mg(2+) ion dislocation from EF-Tu.

Belongs to the EF-Ts family.

The protein resides in the cytoplasm. In terms of biological role, associates with the EF-Tu.GDP complex and induces the exchange of GDP to GTP. It remains bound to the aminoacyl-tRNA.EF-Tu.GTP complex up to the GTP hydrolysis stage on the ribosome. The protein is Elongation factor Ts of Clostridium perfringens (strain ATCC 13124 / DSM 756 / JCM 1290 / NCIMB 6125 / NCTC 8237 / Type A).